The chain runs to 428 residues: Serine--tRNA ligase (428 aa).

231–233 (TAE) serves as a coordination point for L-serine. Position 262–264 (262–264 (RAE)) interacts with ATP. Residue Glu285 participates in L-serine binding. 349–352 (EISS) lines the ATP pocket. Ser385 serves as a coordination point for L-serine.

Belongs to the class-II aminoacyl-tRNA synthetase family. Type-1 seryl-tRNA synthetase subfamily. In terms of assembly, homodimer. The tRNA molecule binds across the dimer.

The protein resides in the cytoplasm. It catalyses the reaction tRNA(Ser) + L-serine + ATP = L-seryl-tRNA(Ser) + AMP + diphosphate + H(+). The enzyme catalyses tRNA(Sec) + L-serine + ATP = L-seryl-tRNA(Sec) + AMP + diphosphate + H(+). The protein operates within aminoacyl-tRNA biosynthesis; selenocysteinyl-tRNA(Sec) biosynthesis; L-seryl-tRNA(Sec) from L-serine and tRNA(Sec): step 1/1. Functionally, catalyzes the attachment of serine to tRNA(Ser). Is also able to aminoacylate tRNA(Sec) with serine, to form the misacylated tRNA L-seryl-tRNA(Sec), which will be further converted into selenocysteinyl-tRNA(Sec). The chain is Serine--tRNA ligase from Methylorubrum extorquens (strain PA1) (Methylobacterium extorquens).